Here is a 145-residue protein sequence, read N- to C-terminus: Bacilliredoxin SH1401 (145 aa).

The protein belongs to the bacilliredoxin family.

This is Bacilliredoxin SH1401 from Staphylococcus haemolyticus (strain JCSC1435).